A 219-amino-acid polypeptide reads, in one-letter code: Cytochrome b6 (219 aa).

Residues 32-52 traverse the membrane as a helical segment; it reads IFYCFGGIVLTAFIFQGASGF. Heme c is bound at residue Cys-35. Heme b-binding residues include His-86 and His-100. Helical transmembrane passes span 90–110, 116–136, and 190–210; these read SGCM…TGGF, LTWI…VTGY, and IHTF…FSLL. Residues His-191 and His-206 each coordinate heme b.

The protein belongs to the cytochrome b family. PetB subfamily. As to quaternary structure, the 4 large subunits of the cytochrome b6-f complex are cytochrome b6, subunit IV (17 kDa polypeptide, PetD), cytochrome f and the Rieske protein, while the 4 small subunits are PetG, PetL, PetM and PetN. The complex functions as a dimer. Heme b serves as cofactor. Heme c is required as a cofactor.

Its subcellular location is the plastid. It is found in the chloroplast thylakoid membrane. Component of the cytochrome b6-f complex, which mediates electron transfer between photosystem II (PSII) and photosystem I (PSI), cyclic electron flow around PSI, and state transitions. The chain is Cytochrome b6 from Heterocapsa triquetra (Dinoflagellate).